Reading from the N-terminus, the 336-residue chain is tRNA N6-adenosine threonylcarbamoyltransferase (336 aa).

2 residues coordinate Fe cation: His-114 and His-118. Residues Leu-136 to Gly-140, Asp-169, Gly-182, Asp-186, and Asn-275 each bind substrate. Asp-301 serves as a coordination point for Fe cation.

This sequence belongs to the KAE1 / TsaD family. Fe(2+) serves as cofactor.

Its subcellular location is the cytoplasm. The catalysed reaction is L-threonylcarbamoyladenylate + adenosine(37) in tRNA = N(6)-L-threonylcarbamoyladenosine(37) in tRNA + AMP + H(+). Its function is as follows. Required for the formation of a threonylcarbamoyl group on adenosine at position 37 (t(6)A37) in tRNAs that read codons beginning with adenine. Is involved in the transfer of the threonylcarbamoyl moiety of threonylcarbamoyl-AMP (TC-AMP) to the N6 group of A37, together with TsaE and TsaB. TsaD likely plays a direct catalytic role in this reaction. The protein is tRNA N6-adenosine threonylcarbamoyltransferase of Streptococcus pneumoniae (strain P1031).